The following is a 307-amino-acid chain: Pseudouridine-5'-phosphate glycosidase (307 aa).

The Proton donor role is filled by E28. The substrate site is built by K89 and V109. D141 is a binding site for Mn(2+). 143 to 145 is a binding site for substrate; sequence SAD. Catalysis depends on K162, which acts as the Nucleophile.

Belongs to the pseudouridine-5'-phosphate glycosidase family. In terms of assembly, homotrimer. Mn(2+) serves as cofactor.

It carries out the reaction D-ribose 5-phosphate + uracil = psi-UMP + H2O. Functionally, catalyzes the reversible cleavage of pseudouridine 5'-phosphate (PsiMP) to ribose 5-phosphate and uracil. Functions biologically in the cleavage direction, as part of a pseudouridine degradation pathway. The protein is Pseudouridine-5'-phosphate glycosidase of Alkaliphilus metalliredigens (strain QYMF).